A 54-amino-acid polypeptide reads, in one-letter code: Ovomucoid (54 aa).

A Kazal-like domain is found at 4–54 (VDCSDYPKPVCSLDYMPLCGSDNTTYNNKCIFCNAVVDSNGTITLSHFGKC). Cystine bridges form between C6/C36, C14/C33, and C22/C54. N43 carries an N-linked (GlcNAc...) asparagine glycan.

Its subcellular location is the secreted. This Haemorhous mexicanus (House finch) protein is Ovomucoid.